A 401-amino-acid polypeptide reads, in one-letter code: Type 3 secretion system translocon protein SctE (401 aa).

A coiled-coil region spans residues isoleucine 129–serine 160. The next 2 helical transmembrane spans lie at isoleucine 166–glycine 186 and leucine 225–phenylalanine 245. Positions leucine 345–leucine 379 form a coiled coil.

It belongs to the SctE/SipB/YopB family. In terms of assembly, the core secretion machinery of the T3SS is composed of approximately 20 different proteins, including cytoplasmic components, a base, an export apparatus and a needle. This subunit is involved in the formation of a pore, called the translocon, in host membrane. Interacts with YopD/SctB. Together with YopD/SctB, forms a multimeric integral membrane complex with a mass of between 500 and 700 kDa.

Its subcellular location is the secreted. It localises to the host membrane. Component of the type III secretion system (T3SS), also called injectisome, which is used to inject bacterial effector proteins into eukaryotic host cells. YopB/SctE and YopD/SctB are inserted into the host membrane where they form a pore and allow the translocation of effector proteins into the cytosol of target cells. Is an essential virulence determinant. Required for YopE translocation. In terms of biological role, essential for the establishment of Yersinia infections in a mouse model system, but not for the targeting of effector Yops. May modulate the host's immune response at a distance from the site of infection. The sequence is that of Type 3 secretion system translocon protein SctE from Yersinia enterocolitica.